We begin with the raw amino-acid sequence, 423 residues long: Heat shock transcription factor, X-linked (423 aa).

Residues 1 to 25 (MEDKRSLSMARCEERNSRGQDHGLE) are compositionally biased toward basic and acidic residues. Disordered stretches follow at residues 1–56 (MEDK…STGS), 215–303 (KSAP…EGSQ), and 397–423 (PHSH…DQST). A DNA-binding region spans residues 98-282 (PFPQKLWRLV…PATPVMVPDS (185 aa)). Lysine 215 is covalently cross-linked (Glycyl lysine isopeptide (Lys-Gly) (interchain with G-Cter in SUMO1)). The span at 243–254 (HTSPNENDQVTP) shows a compositional bias: polar residues.

It belongs to the HSF family. As to expression, testis-specific.

The protein localises to the nucleus. It is found in the cytoplasm. The protein is Heat shock transcription factor, X-linked (HSFX1) of Homo sapiens (Human).